A 1275-amino-acid chain; its full sequence is O-antigen biosynthesis protein RfbC (1275 aa).

Involved in O-antigen biosynthesis. This is O-antigen biosynthesis protein RfbC (rfbC) from Myxococcus xanthus.